A 457-amino-acid chain; its full sequence is Siroheme synthase (457 aa).

The segment at 1–204 (MDHLPIFCQL…NDQKAITETT (204 aa)) is precorrin-2 dehydrogenase /sirohydrochlorin ferrochelatase. NAD(+)-binding positions include 22-23 (DV) and 43-44 (LA). S128 is modified (phosphoserine). Positions 216–457 (GEVVLVGAGP…RDKLNWFSNH (242 aa)) are uroporphyrinogen-III C-methyltransferase. P225 is a binding site for S-adenosyl-L-methionine. The active-site Proton acceptor is the D248. K270 acts as the Proton donor in catalysis. Residues 301–303 (GGD), I306, 331–332 (TA), M382, and G411 each bind S-adenosyl-L-methionine.

It in the N-terminal section; belongs to the precorrin-2 dehydrogenase / sirohydrochlorin ferrochelatase family. In the C-terminal section; belongs to the precorrin methyltransferase family.

The catalysed reaction is uroporphyrinogen III + 2 S-adenosyl-L-methionine = precorrin-2 + 2 S-adenosyl-L-homocysteine + H(+). It catalyses the reaction precorrin-2 + NAD(+) = sirohydrochlorin + NADH + 2 H(+). The enzyme catalyses siroheme + 2 H(+) = sirohydrochlorin + Fe(2+). Its pathway is cofactor biosynthesis; adenosylcobalamin biosynthesis; precorrin-2 from uroporphyrinogen III: step 1/1. It functions in the pathway cofactor biosynthesis; adenosylcobalamin biosynthesis; sirohydrochlorin from precorrin-2: step 1/1. The protein operates within porphyrin-containing compound metabolism; siroheme biosynthesis; precorrin-2 from uroporphyrinogen III: step 1/1. It participates in porphyrin-containing compound metabolism; siroheme biosynthesis; siroheme from sirohydrochlorin: step 1/1. Its pathway is porphyrin-containing compound metabolism; siroheme biosynthesis; sirohydrochlorin from precorrin-2: step 1/1. In terms of biological role, multifunctional enzyme that catalyzes the SAM-dependent methylations of uroporphyrinogen III at position C-2 and C-7 to form precorrin-2 via precorrin-1. Then it catalyzes the NAD-dependent ring dehydrogenation of precorrin-2 to yield sirohydrochlorin. Finally, it catalyzes the ferrochelation of sirohydrochlorin to yield siroheme. The chain is Siroheme synthase from Escherichia fergusonii (strain ATCC 35469 / DSM 13698 / CCUG 18766 / IAM 14443 / JCM 21226 / LMG 7866 / NBRC 102419 / NCTC 12128 / CDC 0568-73).